The primary structure comprises 267 residues: Undecaprenyl-diphosphatase 2 (267 aa).

8 consecutive transmembrane segments (helical) span residues 4-24 (IYFI…FLPI), 43-63 (EEKV…CWLF), 84-104 (FAVI…LFIH), 109-129 (VLFN…IILW), 147-167 (IGFK…IPGT), 186-206 (AATE…AIYD), 219-239 (ILAI…VVNA), and 243-263 (FVAK…GLII).

The protein belongs to the UppP family.

It localises to the cell inner membrane. It catalyses the reaction di-trans,octa-cis-undecaprenyl diphosphate + H2O = di-trans,octa-cis-undecaprenyl phosphate + phosphate + H(+). Its function is as follows. Catalyzes the dephosphorylation of undecaprenyl diphosphate (UPP). Confers resistance to bacitracin. The polypeptide is Undecaprenyl-diphosphatase 2 (Shewanella oneidensis (strain ATCC 700550 / JCM 31522 / CIP 106686 / LMG 19005 / NCIMB 14063 / MR-1)).